A 287-amino-acid polypeptide reads, in one-letter code: ATP synthase gamma chain (287 aa).

This sequence belongs to the ATPase gamma chain family. As to quaternary structure, F-type ATPases have 2 components, CF(1) - the catalytic core - and CF(0) - the membrane proton channel. CF(1) has five subunits: alpha(3), beta(3), gamma(1), delta(1), epsilon(1). CF(0) has three main subunits: a, b and c.

It is found in the cell inner membrane. Functionally, produces ATP from ADP in the presence of a proton gradient across the membrane. The gamma chain is believed to be important in regulating ATPase activity and the flow of protons through the CF(0) complex. In Edwardsiella ictaluri (strain 93-146), this protein is ATP synthase gamma chain.